We begin with the raw amino-acid sequence, 157 residues long: Phospholipase A2 phaiodactylipin (157 aa).

Ca(2+)-binding residues include Trp34 and Gly36. Intrachain disulfides connect Cys35–Cys56, Cys55–Cys94, Cys62–Cys87, Cys85–Cys127, and Cys132–Cys143. Asn43 is a glycosylation site (N-linked (GlcNAc...) asparagine). His59 is an active-site residue. Asp60 lines the Ca(2+) pocket. The active site involves Asp88. Asn101 carries N-linked (GlcNAc...) asparagine glycosylation. The propeptide at 134–139 (DEKSAR) is removed in mature form. Asn153 carries N-linked (GlcNAc...) asparagine glycosylation.

It belongs to the phospholipase A2 family. Group III subfamily. Heterodimer composed of a small subunit and a large subunit; disulfide-linked. Ca(2+) serves as cofactor. In terms of tissue distribution, expressed by the venom gland.

The protein localises to the secreted. The catalysed reaction is a 1,2-diacyl-sn-glycero-3-phosphocholine + H2O = a 1-acyl-sn-glycero-3-phosphocholine + a fatty acid + H(+). In terms of biological role, scorpion venom phospholipase A2 (PLA2) that is lethal to crickets and crustaceae. Causes inflammation in mice and lysis of human erythrocytes. Has a mild anticoagulant effect on human platelets. PLA2 catalyzes the calcium-dependent hydrolysis of the 2-acyl groups in 3-sn-phosphoglycerides. This chain is Phospholipase A2 phaiodactylipin, found in Anuroctonus phaiodactylus (Mafia scorpion).